Here is a 154-residue protein sequence, read N- to C-terminus: Iron-sulfur cluster assembly 2 homolog, mitochondrial (154 aa).

The N-terminal 8 residues, 1 to 8 (MAAAWGSS), are a transit peptide targeting the mitochondrion. Residues 29 to 49 (SLGPQARREASSSSPEAGEGQ) are disordered. Residues 39–49 (SSSSPEAGEGQ) show a composition bias toward low complexity. Fe cation contacts are provided by C79, C144, and C146.

The protein belongs to the HesB/IscA family. In terms of assembly, heterotetramer; forms a dimer of dimers with IBA57. Interacts with [2Fe-2S]-ISCA2 forming the heterodimer [2Fe- 2S]-ISCA2-IBA57 complex; [2Fe-2S] cluster binding is absolutely required to promote the complex formation.

It is found in the mitochondrion. Its function is as follows. Involved in the maturation of mitochondrial 4Fe-4S proteins functioning late in the iron-sulfur cluster assembly pathway. May be involved in the binding of an intermediate of Fe/S cluster assembly. The chain is Iron-sulfur cluster assembly 2 homolog, mitochondrial (ISCA2) from Homo sapiens (Human).